A 486-amino-acid polypeptide reads, in one-letter code: Ribosomal RNA small subunit methyltransferase F (486 aa).

S-adenosyl-L-methionine contacts are provided by residues Ala-124–Lys-130, Glu-148, Asp-175, and Asp-193. The Nucleophile role is filled by Cys-246.

The protein belongs to the class I-like SAM-binding methyltransferase superfamily. RsmB/NOP family.

It localises to the cytoplasm. The catalysed reaction is cytidine(1407) in 16S rRNA + S-adenosyl-L-methionine = 5-methylcytidine(1407) in 16S rRNA + S-adenosyl-L-homocysteine + H(+). In terms of biological role, specifically methylates the cytosine at position 1407 (m5C1407) of 16S rRNA. In Shewanella baltica (strain OS185), this protein is Ribosomal RNA small subunit methyltransferase F.